We begin with the raw amino-acid sequence, 136 residues long: Small ribosomal subunit protein uS9 (136 aa).

A disordered region spans residues 95 to 136 (GLSPDNRKPLKTEGHLSRDPRSKERKKYGLKKARKAGQFSKR). A compositionally biased stretch (basic and acidic residues) spans 99-116 (DNRKPLKTEGHLSRDPRS). A compositionally biased stretch (basic residues) spans 117 to 136 (KERKKYGLKKARKAGQFSKR).

It belongs to the universal ribosomal protein uS9 family.

This is Small ribosomal subunit protein uS9 from Prochlorococcus marinus subsp. pastoris (strain CCMP1986 / NIES-2087 / MED4).